Reading from the N-terminus, the 683-residue chain is Long-chain-fatty-acid--CoA ligase 5 (683 aa).

The helical; Signal-anchor for type III membrane protein transmembrane segment at Leu12–Ile32 threads the bilayer. Residues Asn33 to Glu683 lie on the Cytoplasmic side of the membrane. Lys361 is modified (N6-acetyllysine).

It belongs to the ATP-dependent AMP-binding enzyme family.

The protein localises to the mitochondrion. It localises to the endoplasmic reticulum. Its subcellular location is the mitochondrion outer membrane. It is found in the endoplasmic reticulum membrane. The protein resides in the cell membrane. It catalyses the reaction a long-chain fatty acid + ATP + CoA = a long-chain fatty acyl-CoA + AMP + diphosphate. The catalysed reaction is (5Z,8Z,11Z,14Z)-eicosatetraenoate + ATP + CoA = (5Z,8Z,11Z,14Z)-eicosatetraenoyl-CoA + AMP + diphosphate. The enzyme catalyses hexadecanoate + ATP + CoA = hexadecanoyl-CoA + AMP + diphosphate. It carries out the reaction (E)-hexadec-2-enoate + ATP + CoA = (2E)-hexadecenoyl-CoA + AMP + diphosphate. It catalyses the reaction 15-hydroxy-(5Z,8Z,11Z,13E)-eicosatetraenoate + ATP + CoA = 15-hydroxy-(5Z,8Z,11Z,13E)-eicosatetraenoyl-CoA + AMP + diphosphate. The catalysed reaction is 12-hydroxy-(5Z,8Z,10E,14Z)-eicosatetraenoate + ATP + CoA = 12-hydroxy-(5Z,8Z,10E,14Z)-eicosatetraenoyl-CoA + AMP + diphosphate. The enzyme catalyses 5-hydroxy-(6E,8Z,11Z,14Z)-eicosatetraenoate + ATP + CoA = 5-hydroxy-(6E,8Z,11Z,14Z)-eicosatetraenoyl-CoA + AMP + diphosphate. It carries out the reaction 14,15-epoxy-(5Z,8Z,11Z)-eicosatrienoate + ATP + CoA = 14,15-epoxy-(5Z,8Z,11Z)-eicosatrienoyl-CoA + AMP + diphosphate. It catalyses the reaction 11,12-epoxy-(5Z,8Z,14Z)-eicosatrienoate + ATP + CoA = 11,12-epoxy-(5Z,8Z,14Z)-eicosatrienoyl-CoA + AMP + diphosphate. The catalysed reaction is (9Z)-octadecenoate + ATP + CoA = (9Z)-octadecenoyl-CoA + AMP + diphosphate. In terms of biological role, catalyzes the conversion of long-chain fatty acids to their active form acyl-CoAs for both synthesis of cellular lipids, and degradation via beta-oxidation. ACSL5 may activate fatty acids from exogenous sources for the synthesis of triacylglycerol destined for intracellular storage. It was suggested that it may also stimulate fatty acid oxidation. At the villus tip of the crypt-villus axis of the small intestine may sensitize epithelial cells to apoptosis specifically triggered by the death ligand TRAIL. May have a role in the survival of glioma cells. Utilizes a wide range of saturated fatty acids with a preference for C16-C18 unsaturated fatty acids. The polypeptide is Long-chain-fatty-acid--CoA ligase 5 (Mus musculus (Mouse)).